Reading from the N-terminus, the 321-residue chain is Beta-1,3-N-acetylglucosaminyltransferase manic fringe (321 aa).

Over 1-7 (MQCRLPR) the chain is Cytoplasmic. A helical; Signal-anchor for type II membrane protein transmembrane segment spans residues 8 to 27 (GLAGALLTLLCMGLLCLRYH). The Lumenal segment spans residues 28 to 321 (LNLSPQRVQG…TPWCPQLGAR (294 aa)). Arg-70 lines the substrate pocket. A glycan (N-linked (GlcNAc...) asparagine) is linked at Asn-109. Intrachain disulfides connect Cys-110–Cys-121 and Cys-139–Cys-202. Asp-143 is a substrate binding site. Asp-144 serves as a coordination point for Mn(2+). N-linked (GlcNAc...) asparagine glycosylation occurs at Asn-185. Asp-232 is an active-site residue. A Mn(2+)-binding site is contributed by His-256. Cys-306 and Cys-315 are disulfide-bonded.

The protein belongs to the glycosyltransferase 31 family. Requires Mn(2+) as cofactor.

The protein resides in the golgi apparatus membrane. The catalysed reaction is 3-O-(alpha-L-fucosyl)-L-threonyl-[EGF-like domain protein] + UDP-N-acetyl-alpha-D-glucosamine = 3-O-(N-acetyl-beta-D-glucosaminyl-(1-&gt;3)-alpha-L-fucosyl)-L-threonyl-[EGF-like domain protein] + UDP + H(+). The enzyme catalyses 3-O-(alpha-L-fucosyl)-L-seryl-[EGF-like domain protein] + UDP-N-acetyl-alpha-D-glucosamine = 3-O-(N-acetyl-beta-D-glucosaminyl-(1-&gt;3)-alpha-L-fucosyl)-L-seryl-[EGF-like domain protein] + UDP + H(+). Its function is as follows. Glycosyltransferase that initiates the elongation of O-linked fucose residues attached to EGF-like repeats in the extracellular domain of Notch molecules. Modulates NOTCH1 activity by modifying O-fucose residues at specific EGF-like domains resulting in inhibition of NOTCH1 activation by JAG1 and enhancement of NOTCH1 activation by DLL1 via an increase in its binding to DLL1. The chain is Beta-1,3-N-acetylglucosaminyltransferase manic fringe from Homo sapiens (Human).